The following is a 1133-amino-acid chain: Protein TPR3 (1133 aa).

The region spanning 4–36 is the LisH domain; that stretch reads LSRELVFLILQFLDEEKFKETVHKLEQESGFYF. The region spanning 34 to 92 is the CTLH domain; the sequence is FYFNMKYFEDEVINGNWDEVERYLGGFTKVDDNRYSMKIFFEIRKQKYLEALDKHDRSK. The segment at 287–307 is disordered; it reads PTTANPSMDYPSGDSDHVSKR. 12 WD repeats span residues 348 to 388, 410 to 449, 455 to 496, 499 to 540, 543 to 586, 590 to 629, 634 to 673, 771 to 810, 837 to 875, 878 to 918, 921 to 960, and 1014 to 1053; these read SQGS…RLVL, DPTV…DIRQ, AHVG…KQFT, GHEA…SRVD, APGH…VKRT, FRKR…LLTT, GGLP…RLLR, MRTS…RNSS, NPEE…TMTT, PPPP…VKSK, GHSK…KLKS, and ENSS…LQCR. Positions 1099-1133 are disordered; the sequence is ESERKWGNPPPAENGSTSALSTPPNGASSSDQPER. Residues 1112–1133 are compositionally biased toward polar residues; it reads NGSTSALSTPPNGASSSDQPER.

Tetramer. Interacts with D53. Interacts with MODD and HDAC1. Interacts with WOX1. Interacts with MOF1. Expressed in panicles, stems, leaves, spikelets and seed endosperm.

Its function is as follows. Probable downstream regulator of strigolactones signaling. Functions in a complex with MODD and HDAC1 to down-regulate the histone acetylation level at BZIP46 target genes. BZIP46 is a positive regulator of abscisic acid (ABA) signaling and drought stress tolerance. This is Protein TPR3 from Oryza sativa subsp. japonica (Rice).